A 227-amino-acid chain; its full sequence is tRNA (guanine-N(7)-)-methyltransferase (227 aa).

The tract at residues 1 to 21 (MPDMTMKSQPDRLYGRQRGHA) is disordered. S-adenosyl-L-methionine is bound by residues E54, E79, D114, and D136. Residue D136 is part of the active site. Substrate contacts are provided by residues K140, D172, and 206–209 (TRYE).

This sequence belongs to the class I-like SAM-binding methyltransferase superfamily. TrmB family.

It carries out the reaction guanosine(46) in tRNA + S-adenosyl-L-methionine = N(7)-methylguanosine(46) in tRNA + S-adenosyl-L-homocysteine. It participates in tRNA modification; N(7)-methylguanine-tRNA biosynthesis. Catalyzes the formation of N(7)-methylguanine at position 46 (m7G46) in tRNA. The polypeptide is tRNA (guanine-N(7)-)-methyltransferase (Granulibacter bethesdensis (strain ATCC BAA-1260 / CGDNIH1)).